Here is a 415-residue protein sequence, read N- to C-terminus: Esterase FrsA (415 aa).

This sequence belongs to the FrsA family.

The catalysed reaction is a carboxylic ester + H2O = an alcohol + a carboxylate + H(+). Catalyzes the hydrolysis of esters. The sequence is that of Esterase FrsA from Yersinia enterocolitica serotype O:8 / biotype 1B (strain NCTC 13174 / 8081).